A 99-amino-acid chain; its full sequence is Regulatory protein FanB (99 aa).

Functionally, trans-acting protein involved in the regulation of the biogenesis of K99 fimbriae (FanC). This Escherichia coli protein is Regulatory protein FanB (fanB).